The primary structure comprises 182 residues: LPS-assembly lipoprotein LptE (182 aa).

The signal sequence occupies residues 1–19 (MRHRILTLLLGLAVLVTAG). Residue C20 is the site of N-palmitoyl cysteine attachment. A lipid anchor (S-diacylglycerol cysteine) is attached at C20.

This sequence belongs to the LptE lipoprotein family. In terms of assembly, component of the lipopolysaccharide transport and assembly complex. Interacts with LptD.

The protein resides in the cell outer membrane. In terms of biological role, together with LptD, is involved in the assembly of lipopolysaccharide (LPS) at the surface of the outer membrane. Required for the proper assembly of LptD. Binds LPS and may serve as the LPS recognition site at the outer membrane. In Photorhabdus laumondii subsp. laumondii (strain DSM 15139 / CIP 105565 / TT01) (Photorhabdus luminescens subsp. laumondii), this protein is LPS-assembly lipoprotein LptE.